The primary structure comprises 469 residues: Interstitial collagenase (469 aa).

The N-terminal stretch at 1–18 (MPRLPLLLLLLWGTGSHG) is a signal peptide. Residues 19 to 99 (FPAATSETQE…PRCGVPDVAP (81 aa)) constitute a propeptide, activation peptide. The Cysteine switch motif lies at 90-97 (PRCGVPDV). Cysteine 92 contributes to the Zn(2+) binding site. Asparagine 120 is a glycosylation site (N-linked (GlcNAc...) asparagine). Aspartate 124 and aspartate 158 together coordinate Ca(2+). Residues histidine 168 and aspartate 170 each coordinate Zn(2+). Ca(2+) contacts are provided by aspartate 175, glycine 176, glycine 178, and asparagine 180. Histidine 183 lines the Zn(2+) pocket. 3 residues coordinate Ca(2+): glycine 190, glycine 192, and aspartate 194. Histidine 196 contributes to the Zn(2+) binding site. Residues aspartate 198, aspartate 199, and glutamate 201 each contribute to the Ca(2+) site. Histidine 218 contributes to the Zn(2+) binding site. Residue glutamate 219 is part of the active site. Zn(2+)-binding residues include histidine 222 and histidine 228. Threonine 274 carries the phosphothreonine modification. Hemopexin repeat units lie at residues 275–324 (PEVC…WPQL), 325–371 (PNGL…FGFP), 374–422 (VKSI…FPGI), and 423–466 (GNKV…WFNC). Cysteine 278 and cysteine 466 are oxidised to a cystine. Aspartate 285 and glutamine 329 together coordinate Ca(2+). Tyrosine 360 is modified (phosphotyrosine; by PKDCC). Ca(2+)-binding residues include aspartate 378 and aspartate 427.

Belongs to the peptidase M10A family. It depends on Ca(2+) as a cofactor. Zn(2+) serves as cofactor. In terms of processing, tyrosine phosphorylated in platelets by PKDCC/VLK.

Its subcellular location is the secreted. It is found in the extracellular space. It localises to the extracellular matrix. The catalysed reaction is Cleavage of the triple helix of collagen at about three-quarters of the length of the molecule from the N-terminus, at 775-Gly-|-Ile-776 in the alpha1(I) chain. Cleaves synthetic substrates and alpha-macroglobulins at bonds where P1' is a hydrophobic residue.. Its activity is regulated as follows. Can be activated without removal of the activation peptide. In terms of biological role, cleaves collagens of types I, II, and III at one site in the helical domain. Also cleaves collagens of types VII and X. The polypeptide is Interstitial collagenase (MMP1) (Bos taurus (Bovine)).